Here is an 89-residue protein sequence, read N- to C-terminus: Meiosis expressed gene 1 protein homolog (89 aa).

Belongs to the MEIG1 family.

In Nematostella vectensis (Starlet sea anemone), this protein is Meiosis expressed gene 1 protein homolog.